Here is a 176-residue protein sequence, read N- to C-terminus: uncharacterized protein (176 aa).

The segment at 71–176 is disordered; sequence RDDMSSDSDG…YSTDDDEDDY (106 aa). 2 stretches are compositionally biased toward low complexity: residues 77-87 and 100-109; these read DSDGPAASPPG and SYSSSDSSAR. Basic residues predominate over residues 140 to 152; sequence KARRPARKKKRIG.

This is an uncharacterized protein from Orgyia pseudotsugata multicapsid polyhedrosis virus (OpMNPV).